Reading from the N-terminus, the 245-residue chain is Nucleoprotein (245 aa).

RNA is bound by residues Tyr30, Lys67, Arg106, Arg186, and Ser196.

It belongs to the phlebovirus nucleocapsid protein family. As to quaternary structure, homodimer. Homohexamer; ring-shaped, necessary to form the nucleocapsid. Homopentamers; opened pentamers in solution. Binds to viral genomic RNA. Interacts with glycoprotein Gn; this interaction allows packaging of nucleocapsids into virions.

Its subcellular location is the virion. The protein localises to the host cytoplasm. It localises to the host nucleus. It is found in the host endoplasmic reticulum-Golgi intermediate compartment. The protein resides in the host Golgi apparatus. In terms of biological role, encapsidates the genomic RNA, protecting it from nucleases. Displays high affinity for single-stranded nucleic acid. The encapsidated genomic RNA is termed the nucleocapsid (NC) or ribonucleoprotein. The ribonucleoprotein has a non-helical structure. Serves as template for viral transcription and replication. After replication, the nucleocapsid is recruited to the host Golgi apparatus by glycoprotein Gn for packaging into virus particles. This is Nucleoprotein (NP) from Dabie bandavirus (Severe fever with thrombocytopenia virus).